The following is a 343-amino-acid chain: Heat-inducible transcription repressor HrcA (343 aa).

The protein belongs to the HrcA family.

Its function is as follows. Negative regulator of class I heat shock genes (grpE-dnaK-dnaJ and groELS operons). Prevents heat-shock induction of these operons. The protein is Heat-inducible transcription repressor HrcA of Clostridium botulinum (strain Eklund 17B / Type B).